The chain runs to 243 residues: Epoxyqueuosine reductase QueH (243 aa).

A compositionally biased stretch (basic and acidic residues) spans 1–16; it reads MHRTKLEQKQPHFDAQ. Positions 1–30 are disordered; the sequence is MHRTKLEQKQPHFDAQKRRKKECKNSNTPF. Cys-49, Cys-50, Cys-128, and Cys-131 together coordinate [4Fe-4S] cluster. Cys-211 and Cys-213 are disulfide-bonded.

The protein belongs to the QueH family.

The enzyme catalyses epoxyqueuosine(34) in tRNA + AH2 = queuosine(34) in tRNA + A + H2O. The protein operates within tRNA modification; tRNA-queuosine biosynthesis. Its function is as follows. Catalyzes the conversion of epoxyqueuosine (oQ) to queuosine (Q), which is a hypermodified base found in the wobble positions of tRNA(Asp), tRNA(Asn), tRNA(His) and tRNA(Tyr). This is Epoxyqueuosine reductase QueH from Histophilus somni (strain 129Pt) (Haemophilus somnus).